The sequence spans 281 residues: Pantothenate synthetase (281 aa).

Methionine 30–histidine 37 is an ATP binding site. Histidine 37 serves as the catalytic Proton donor. Residue glutamine 61 participates in (R)-pantoate binding. Beta-alanine is bound at residue glutamine 61. Residue glycine 149–aspartate 152 participates in ATP binding. Residue glutamine 155 participates in (R)-pantoate binding. Residues valine 178 and methionine 186–arginine 189 contribute to the ATP site.

It belongs to the pantothenate synthetase family. Homodimer.

The protein localises to the cytoplasm. The enzyme catalyses (R)-pantoate + beta-alanine + ATP = (R)-pantothenate + AMP + diphosphate + H(+). It participates in cofactor biosynthesis; (R)-pantothenate biosynthesis; (R)-pantothenate from (R)-pantoate and beta-alanine: step 1/1. Functionally, catalyzes the condensation of pantoate with beta-alanine in an ATP-dependent reaction via a pantoyl-adenylate intermediate. The sequence is that of Pantothenate synthetase from Shewanella amazonensis (strain ATCC BAA-1098 / SB2B).